The sequence spans 64 residues: MKTKEINELTTAEMLDKEKSYKDELFNLRFQLATGQLENTARLKQVRKNIARLKTALRQQELNK.

Belongs to the universal ribosomal protein uL29 family.

This is Large ribosomal subunit protein uL29 from Levilactobacillus brevis (strain ATCC 367 / BCRC 12310 / CIP 105137 / JCM 1170 / LMG 11437 / NCIMB 947 / NCTC 947) (Lactobacillus brevis).